Here is a 245-residue protein sequence, read N- to C-terminus: Pyridoxine 5'-phosphate synthase (245 aa).

Asparagine 7 lines the 3-amino-2-oxopropyl phosphate pocket. 9 to 10 (DH) is a 1-deoxy-D-xylulose 5-phosphate binding site. Arginine 18 contacts 3-amino-2-oxopropyl phosphate. Histidine 43 (proton acceptor) is an active-site residue. Residues arginine 45 and histidine 50 each contribute to the 1-deoxy-D-xylulose 5-phosphate site. The active-site Proton acceptor is the glutamate 70. Threonine 100 contacts 1-deoxy-D-xylulose 5-phosphate. The active-site Proton donor is the histidine 190. Residues glycine 191 and 212-213 (GH) each bind 3-amino-2-oxopropyl phosphate.

The protein belongs to the PNP synthase family. Homooctamer; tetramer of dimers.

The protein resides in the cytoplasm. It catalyses the reaction 3-amino-2-oxopropyl phosphate + 1-deoxy-D-xylulose 5-phosphate = pyridoxine 5'-phosphate + phosphate + 2 H2O + H(+). It functions in the pathway cofactor biosynthesis; pyridoxine 5'-phosphate biosynthesis; pyridoxine 5'-phosphate from D-erythrose 4-phosphate: step 5/5. Catalyzes the complicated ring closure reaction between the two acyclic compounds 1-deoxy-D-xylulose-5-phosphate (DXP) and 3-amino-2-oxopropyl phosphate (1-amino-acetone-3-phosphate or AAP) to form pyridoxine 5'-phosphate (PNP) and inorganic phosphate. This Prochlorococcus marinus (strain NATL2A) protein is Pyridoxine 5'-phosphate synthase.